The chain runs to 39 residues: Potassium channel toxin alpha-KTx 2.18 (39 aa).

3 cysteine pairs are disulfide-bonded: Cys7–Cys29, Cys13–Cys34, and Cys17–Cys36. Ile39 is subject to Isoleucine amide.

Belongs to the short scorpion toxin superfamily. Potassium channel inhibitor family. Alpha-KTx 02 subfamily. In terms of tissue distribution, expressed by the venom gland.

It is found in the secreted. Functionally, weakly blocks Kv1.3/KCNA3 voltage-gated potassium channels. The sequence is that of Potassium channel toxin alpha-KTx 2.18 from Centruroides limpidus (Mexican scorpion).